A 285-amino-acid chain; its full sequence is Nucleotide-binding protein PFLU_0879 (285 aa).

8–15 (GRSGSGKS) contacts ATP. 60–63 (DARN) contacts GTP.

This sequence belongs to the RapZ-like family.

Displays ATPase and GTPase activities. The protein is Nucleotide-binding protein PFLU_0879 of Pseudomonas fluorescens (strain SBW25).